Consider the following 292-residue polypeptide: Glycine--tRNA ligase alpha subunit (292 aa).

Belongs to the class-II aminoacyl-tRNA synthetase family. In terms of assembly, tetramer of two alpha and two beta subunits.

The protein resides in the cytoplasm. It carries out the reaction tRNA(Gly) + glycine + ATP = glycyl-tRNA(Gly) + AMP + diphosphate. The chain is Glycine--tRNA ligase alpha subunit from Geobacter sulfurreducens (strain ATCC 51573 / DSM 12127 / PCA).